Here is a 678-residue protein sequence, read N- to C-terminus: Protein CASP (678 aa).

The Cytoplasmic segment spans residues 1–619 (MAANVGSMFQ…LVLSNKMART (619 aa)). 2 coiled-coil regions span residues 67-450 (LLKS…QDLS) and 502-556 (LSII…FLQS). Serine 586 is subject to Phosphoserine. The helical; Anchor for type IV membrane protein transmembrane segment at 620–640 (IGFFYTLFLHCLVFLVLYKLA) threads the bilayer. At 641–678 (WSESMERDCATFCAKKFADHLHKFHENDNGAAAGDLWQ) the chain is on the lumenal side.

The protein belongs to the CASP family. In terms of assembly, homodimer; disulfide-linked. Interacts with GOLGA5.

It is found in the golgi apparatus membrane. In terms of biological role, may be involved in intra-Golgi retrograde transport. The protein is Protein CASP (CUTL1) of Pongo abelii (Sumatran orangutan).